Reading from the N-terminus, the 338-residue chain is Glyceraldehyde-3-phosphate dehydrogenase (338 aa).

Residues arginine 12–isoleucine 13, aspartate 34, and arginine 79 contribute to the NAD(+) site. D-glyceraldehyde 3-phosphate contacts are provided by residues serine 150 to threonine 152, threonine 181, threonine 210 to glycine 211, and arginine 233. Residue cysteine 151 is the Nucleophile of the active site. Asparagine 315 contacts NAD(+).

The protein belongs to the glyceraldehyde-3-phosphate dehydrogenase family. Homotetramer.

It is found in the cytoplasm. It catalyses the reaction D-glyceraldehyde 3-phosphate + phosphate + NAD(+) = (2R)-3-phospho-glyceroyl phosphate + NADH + H(+). It participates in carbohydrate degradation; glycolysis; pyruvate from D-glyceraldehyde 3-phosphate: step 1/5. This is Glyceraldehyde-3-phosphate dehydrogenase (GPD) from Sordaria macrospora.